We begin with the raw amino-acid sequence, 92 residues long: YcgL domain-containing protein Sputcn32_1766 (92 aa).

The YcgL domain maps to 1 to 85 (MLCTVYKSTR…PQVNLLAEHK (85 aa)).

This Shewanella putrefaciens (strain CN-32 / ATCC BAA-453) protein is YcgL domain-containing protein Sputcn32_1766.